We begin with the raw amino-acid sequence, 254 residues long: 3-dehydroquinate dehydratase (254 aa).

3-dehydroquinate contacts are provided by residues 47–49 (EFR) and Arg83. The Proton donor/acceptor role is filled by His144. Lys171 functions as the Schiff-base intermediate with substrate in the catalytic mechanism. 3 residues coordinate 3-dehydroquinate: Arg213, Ser232, and Gln236.

Belongs to the type-I 3-dehydroquinase family. Homodimer.

The enzyme catalyses 3-dehydroquinate = 3-dehydroshikimate + H2O. It functions in the pathway metabolic intermediate biosynthesis; chorismate biosynthesis; chorismate from D-erythrose 4-phosphate and phosphoenolpyruvate: step 3/7. In terms of biological role, involved in the third step of the chorismate pathway, which leads to the biosynthesis of aromatic amino acids. Catalyzes the cis-dehydration of 3-dehydroquinate (DHQ) and introduces the first double bond of the aromatic ring to yield 3-dehydroshikimate. The polypeptide is 3-dehydroquinate dehydratase (Neisseria meningitidis serogroup B (strain ATCC BAA-335 / MC58)).